Consider the following 156-residue polypeptide: ATP synthase subunit b (156 aa).

Residues 12 to 32 traverse the membrane as a helical segment; sequence IAFAIFVLFCMKFIWPALMGA.

The protein belongs to the ATPase B chain family. In terms of assembly, F-type ATPases have 2 components, F(1) - the catalytic core - and F(0) - the membrane proton channel. F(1) has five subunits: alpha(3), beta(3), gamma(1), delta(1), epsilon(1). F(0) has three main subunits: a(1), b(2) and c(10-14). The alpha and beta chains form an alternating ring which encloses part of the gamma chain. F(1) is attached to F(0) by a central stalk formed by the gamma and epsilon chains, while a peripheral stalk is formed by the delta and b chains.

The protein resides in the cell inner membrane. Functionally, f(1)F(0) ATP synthase produces ATP from ADP in the presence of a proton or sodium gradient. F-type ATPases consist of two structural domains, F(1) containing the extramembraneous catalytic core and F(0) containing the membrane proton channel, linked together by a central stalk and a peripheral stalk. During catalysis, ATP synthesis in the catalytic domain of F(1) is coupled via a rotary mechanism of the central stalk subunits to proton translocation. Its function is as follows. Component of the F(0) channel, it forms part of the peripheral stalk, linking F(1) to F(0). This is ATP synthase subunit b from Psychrobacter sp. (strain PRwf-1).